The chain runs to 276 residues: Dermonecrotic toxin LsaSicTox-alphaIB2iii (276 aa).

His5 is a catalytic residue. Positions 25 and 27 each coordinate Mg(2+). His41 functions as the Nucleophile in the catalytic mechanism. 2 disulfides stabilise this stretch: Cys45/Cys51 and Cys47/Cys190. Asp85 serves as a coordination point for Mg(2+). 2 N-linked (GlcNAc...) asparagine glycosylation sites follow: Asn129 and Asn253.

The protein belongs to the arthropod phospholipase D family. Class II subfamily. Requires Mg(2+) as cofactor. In terms of tissue distribution, expressed by the venom gland.

Its subcellular location is the secreted. It catalyses the reaction an N-(acyl)-sphingosylphosphocholine = an N-(acyl)-sphingosyl-1,3-cyclic phosphate + choline. The catalysed reaction is an N-(acyl)-sphingosylphosphoethanolamine = an N-(acyl)-sphingosyl-1,3-cyclic phosphate + ethanolamine. It carries out the reaction a 1-acyl-sn-glycero-3-phosphocholine = a 1-acyl-sn-glycero-2,3-cyclic phosphate + choline. The enzyme catalyses a 1-acyl-sn-glycero-3-phosphoethanolamine = a 1-acyl-sn-glycero-2,3-cyclic phosphate + ethanolamine. Its function is as follows. Dermonecrotic toxins cleave the phosphodiester linkage between the phosphate and headgroup of certain phospholipids (sphingolipid and lysolipid substrates), forming an alcohol (often choline) and a cyclic phosphate. This toxin acts on sphingomyelin (SM). It may also act on ceramide phosphoethanolamine (CPE), lysophosphatidylcholine (LPC) and lysophosphatidylethanolamine (LPE), but not on lysophosphatidylserine (LPS), and lysophosphatidylglycerol (LPG). It acts by transphosphatidylation, releasing exclusively cyclic phosphate products as second products. Induces dermonecrosis, hemolysis, increased vascular permeability, edema, inflammatory response, and platelet aggregation. In Loxosceles sabina (Tucson recluse spider), this protein is Dermonecrotic toxin LsaSicTox-alphaIB2iii.